A 2345-amino-acid chain; its full sequence is Acetyl-CoA carboxylase 1 (2345 aa).

Met-1 is modified (N-acetylmethionine). 8 positions are modified to phosphoserine: Ser-5, Ser-23, Ser-25, Ser-29, Ser-34, Ser-47, Ser-49, and Ser-52. Residue Thr-57 is modified to Phosphothreonine. 2 positions are modified to phosphoserine: Ser-77 and Ser-79. Ser-79 is subject to Phosphoserine; by AMPK. In terms of domain architecture, Biotin carboxylation spans 116–617 (VIEKVLIANN…DTGWLDRLIA (502 aa)). Residues 274-465 (SKRILNVPQD…LPAAQLQIAM (192 aa)) enclose the ATP-grasp domain. 300 to 357 (AEEVGYPVMIKASEGGGGKGIRKVNNADDFPNLFRQVQAEVPGSPIFVMRLAKQSRHL) contacts ATP. 3 residues coordinate Mg(2+): Glu-423, Glu-436, and Asn-438. Mn(2+) contacts are provided by Glu-423, Glu-436, and Asn-438. The active site involves Arg-440. Residue Thr-609 is modified to Phosphothreonine. One can recognise a Biotinyl-binding domain in the interval 744–818 (FEKENDPSVM…DPGCVIAKMQ (75 aa)). Lys-785 bears the N6-biotinyllysine mark. Phosphoserine occurs at positions 834, 1200, 1215, and 1217. The residue at position 1226 (Thr-1226) is a Phosphothreonine. 3 positions are modified to phosphoserine: Ser-1258, Ser-1262, and Ser-1272. Residue Lys-1333 is modified to N6-acetyllysine. Positions 1575–1913 (PYVTKDLLQS…SVHSSVPLLN (339 aa)) constitute a CoA carboxyltransferase N-terminal domain. Residues 1575-2233 (PYVTKDLLQS…EDLVKKKIHN (659 aa)) are carboxyltransferase. The CoA site is built by Arg-1822, Lys-2126, and Arg-2128. Positions 1917–2233 (PIDRIIEFVP…EDLVKKKIHN (317 aa)) constitute a CoA carboxyltransferase C-terminal domain. Thr-2152 bears the Phosphothreonine mark.

In terms of assembly, monomer, homodimer, and homotetramer. Can form filamentous polymers. Interacts in its inactive phosphorylated form with the BRCT domains of BRCA1 which prevents ACACA dephosphorylation and inhibits lipid synthesis. Interacts with MID1IP1; interaction with MID1IP1 promotes oligomerization and increases its activity. Mg(2+) is required as a cofactor. The cofactor is Mn(2+). Biotin serves as cofactor. Phosphorylation on Ser-1262 is required for interaction with BRCA1. Post-translationally, phosphorylation at Ser-79 by AMPK inactivates enzyme activity. In terms of processing, the biotin cofactor is covalently attached to the central biotinyl-binding domain and is required for the catalytic activity.

Its subcellular location is the cytoplasm. It localises to the cytosol. The catalysed reaction is hydrogencarbonate + acetyl-CoA + ATP = malonyl-CoA + ADP + phosphate + H(+). Its pathway is lipid metabolism; malonyl-CoA biosynthesis; malonyl-CoA from acetyl-CoA: step 1/1. Inhibited by phosphorylation. Citrate promotes oligomerization of the protein into filaments that correspond to the most active form of the carboxylase. Cytosolic enzyme that catalyzes the carboxylation of acetyl-CoA to malonyl-CoA, the first and rate-limiting step of de novo fatty acid biosynthesis. This is a 2 steps reaction starting with the ATP-dependent carboxylation of the biotin carried by the biotin carboxyl carrier (BCC) domain followed by the transfer of the carboxyl group from carboxylated biotin to acetyl-CoA. The polypeptide is Acetyl-CoA carboxylase 1 (Mus musculus (Mouse)).